A 458-amino-acid polypeptide reads, in one-letter code: Exodeoxyribonuclease 7 large subunit (458 aa).

This sequence belongs to the XseA family. Heterooligomer composed of large and small subunits.

The protein resides in the cytoplasm. The enzyme catalyses Exonucleolytic cleavage in either 5'- to 3'- or 3'- to 5'-direction to yield nucleoside 5'-phosphates.. In terms of biological role, bidirectionally degrades single-stranded DNA into large acid-insoluble oligonucleotides, which are then degraded further into small acid-soluble oligonucleotides. The polypeptide is Exodeoxyribonuclease 7 large subunit (Escherichia coli O17:K52:H18 (strain UMN026 / ExPEC)).